The chain runs to 221 residues: Vesicle-associated membrane protein 713 (221 aa).

Ala-2 is modified (N-acetylalanine). The Cytoplasmic portion of the chain corresponds to 2 to 190; it reads AIIFALVARG…RTIMWWRNVK (189 aa). The Longin domain maps to 7 to 112; sequence LVARGTVVLS…SMNDEFSRVL (106 aa). In terms of domain architecture, v-SNARE coiled-coil homology spans 127–187; sequence RMSRIKGEMS…RRYRTIMWWR (61 aa). Residues 191-211 traverse the membrane as a helical; Anchor for type IV membrane protein segment; that stretch reads LTIALILVLALVVYIAMAFVC. Over 212 to 221 the chain is Vesicular; the sequence is HGPSLPSCFK.

This sequence belongs to the synaptobrevin family. Interacts with subunits of the vacuole protein sorting (HOPS) complex including VPS11, VCL1, VPS18, VPS33, VPS39 and VPS41. Highly expressed in stems and roots. Detected in flowers and leaves.

Its subcellular location is the vacuole membrane. It localises to the prevacuolar compartment membrane. In terms of biological role, involved in the targeting and/or fusion of transport vesicles to their target membrane. This chain is Vesicle-associated membrane protein 713, found in Arabidopsis thaliana (Mouse-ear cress).